Reading from the N-terminus, the 1007-residue chain is Lysosomal alpha-mannosidase (1007 aa).

2 stretches are compositionally biased toward low complexity: residues 1 to 10 (MGADARPLGV) and 19 to 28 (AARPGTSSRA). The tract at residues 1–30 (MGADARPLGVRAGGGGRGAARPGTSSRALP) is disordered. Positions 1–50 (MGADARPLGVRAGGGGRGAARPGTSSRALPPPLPPLSFLLLLLAAPGARA) are cleaved as a signal peptide. 2 disulfides stabilise this stretch: Cys56/Cys360 and Cys269/Cys274. Residues His73 and Asp75 each contribute to the Zn(2+) site. Asn134 carries an N-linked (GlcNAc...) asparagine glycan. Asp197 is a Zn(2+) binding site. Asp197 serves as the catalytic Nucleophile. N-linked (GlcNAc...) asparagine glycans are attached at residues Asn311, Asn347, and Asn369. Cystine bridges form between Cys414-Cys474 and Cys495-Cys503. His448 serves as a coordination point for Zn(2+). Asn499, Asn543, Asn643, Asn649, Asn690, Asn764, and Asn927 each carry an N-linked (GlcNAc...) asparagine glycan.

The protein belongs to the glycosyl hydrolase 38 family. It depends on Zn(2+) as a cofactor. In terms of processing, processed into 3 peptides of 72 kDa, 41 kDa and 12 kDa.

The protein localises to the lysosome. The catalysed reaction is Hydrolysis of terminal, non-reducing alpha-D-mannose residues in alpha-D-mannosides.. Functionally, necessary for the catabolism of N-linked carbohydrates released during glycoprotein turnover. This Felis catus (Cat) protein is Lysosomal alpha-mannosidase (MAN2B1).